We begin with the raw amino-acid sequence, 161 residues long: Nucleotide-binding protein Nmul_A1044 (161 aa).

Belongs to the YajQ family.

Its function is as follows. Nucleotide-binding protein. In Nitrosospira multiformis (strain ATCC 25196 / NCIMB 11849 / C 71), this protein is Nucleotide-binding protein Nmul_A1044.